The sequence spans 120 residues: Large ribosomal subunit protein uL18 (120 aa).

The protein belongs to the universal ribosomal protein uL18 family. As to quaternary structure, part of the 50S ribosomal subunit; part of the 5S rRNA/L5/L18/L25 subcomplex. Contacts the 5S and 23S rRNAs.

In terms of biological role, this is one of the proteins that bind and probably mediate the attachment of the 5S RNA into the large ribosomal subunit, where it forms part of the central protuberance. In Bradyrhizobium sp. (strain ORS 278), this protein is Large ribosomal subunit protein uL18.